A 601-amino-acid chain; its full sequence is MSTISIHHVGILRNPLPSKNKRALINNPWSLSLPRSSSASRLVKPCRISSKTDTNPAEITRRSANYEPSLWDFDYIQSLNGHQHYKKEKQLKREEELIVQVKMLLGTKMEAVKQLELIDDLKNLGLSYFFRDEIKKILTSIYNNSFENNNQVGDLYFTALGFRLLRQHGFNVSQRIFDCFKNEKGSHFDETLIGEDIKATLQLYETSFHLREGENTLELARQISTKYLQKMVDEGRINDENLSSWIRHSLDLPLHWRIQRLEARWSLDAYAAREDKNPLIFELAKLDFNIIQATQQEELKEVSRWWNDSCLAEKLPFVRDRVVECYFWAVGLFDCHDYGFQRKITAAVNILITAIDDVYDVYGTLDELQLFTDVIRRWDTQSIDQLPYYMQLCYLMLYNFVSSLGYDILKDRGINTILHLHQSWVSVVEAYLKEAEWYESGYAPSLEEYLSIATISIGLIPIVIPLDLSIPNSTIHRHTRIDHRHEILNLSGMVLRLADDLGTASSELERGDVPKAIQCYMKDTNASEEEAREHVRFLIGEAWKELNTAMAEPDDHPFTEQGAGAAANIGRAAQFIYLEGDGHAHFQNHQHLENLFFHPYV.

The transit peptide at 1–35 directs the protein to the chloroplast; sequence MSTISIHHVGILRNPLPSKNKRALINNPWSLSLPR. Mn(2+) contacts are provided by Asp-356 and Asp-360. Residues 356–360 carry the DDXXD motif motif; it reads DDVYD. Homodimerization regions lie at residues 362 to 368 and 434 to 471; these read YGTLDEL and EAEWYESGYAPSLEEYLSIATISIGLIPIVIPLDLSIP. Positions 499 and 507 each coordinate Mn(2+).

This sequence belongs to the terpene synthase family. Homodimer. Mn(2+) serves as cofactor. The cofactor is Mg(2+). Expressed in peltate glandular trichomes. Present at low levels in flowers and stems.

The protein resides in the plastid. The protein localises to the chloroplast. It carries out the reaction (2E)-geranyl diphosphate = beta-phellandrene + diphosphate. The enzyme catalyses (2E)-geranyl diphosphate = (1R,5R)-sabinene + diphosphate. It participates in secondary metabolite biosynthesis; terpenoid biosynthesis. Functionally, involved in the biosynthesis of phenolic monoterpenes natural products. Monoterpene synthase that catalyzes mainly the formation of olefins such as sabinene and beta-phellandrene, and minor amounts of other monoterpenes (e.g. myrcene, gamma-terpinene, alpha-thujene and alpha-pinene) from geranyl diphosphate (GPP). This chain is Beta-phellandrene synthase, found in Origanum vulgare (Wild marjoram).